A 119-amino-acid polypeptide reads, in one-letter code: Large ribosomal subunit protein bL20 (119 aa).

It belongs to the bacterial ribosomal protein bL20 family.

In terms of biological role, binds directly to 23S ribosomal RNA and is necessary for the in vitro assembly process of the 50S ribosomal subunit. It is not involved in the protein synthesizing functions of that subunit. This chain is Large ribosomal subunit protein bL20, found in Coxiella burnetii (strain CbuK_Q154) (Coxiella burnetii (strain Q154)).